Here is a 47-residue protein sequence, read N- to C-terminus: Cytochrome b559 subunit beta (47 aa).

A helical transmembrane segment spans residues 23–39 (WLAVHALAIPSVFFLGA). His-27 is a heme binding site.

Belongs to the PsbE/PsbF family. Heterodimer of an alpha subunit and a beta subunit. PSII is composed of 1 copy each of membrane proteins PsbA, PsbB, PsbC, PsbD, PsbE, PsbF, PsbH, PsbI, PsbJ, PsbK, PsbL, PsbM, PsbT, PsbX, PsbY, Psb30/Ycf12, peripheral proteins PsbO, CyanoQ (PsbQ), PsbU, PsbV and a large number of cofactors. It forms dimeric complexes. The cofactor is heme b.

Its subcellular location is the cellular thylakoid membrane. Its function is as follows. This b-type cytochrome is tightly associated with the reaction center of photosystem II (PSII). PSII is a light-driven water:plastoquinone oxidoreductase that uses light energy to abstract electrons from H(2)O, generating O(2) and a proton gradient subsequently used for ATP formation. It consists of a core antenna complex that captures photons, and an electron transfer chain that converts photonic excitation into a charge separation. The sequence is that of Cytochrome b559 subunit beta from Prochlorococcus marinus subsp. pastoris (strain CCMP1986 / NIES-2087 / MED4).